Here is a 350-residue protein sequence, read N- to C-terminus: Protein RecA (350 aa).

67–74 (GPESSGKT) is a binding site for ATP.

It belongs to the RecA family.

Its subcellular location is the cytoplasm. Its function is as follows. Can catalyze the hydrolysis of ATP in the presence of single-stranded DNA, the ATP-dependent uptake of single-stranded DNA by duplex DNA, and the ATP-dependent hybridization of homologous single-stranded DNAs. It interacts with LexA causing its activation and leading to its autocatalytic cleavage. In Chlamydia felis (strain Fe/C-56) (Chlamydophila felis), this protein is Protein RecA.